The sequence spans 490 residues: Allantoin permease (490 aa).

12 helical membrane-spanning segments follow: residues 36 to 56 (IWMGCIHNIPTYATVGGLIAI), 60 to 80 (PWQVLAIIITASLILFGALAL), 116 to 136 (AIMWLGIQTFAGSTALNILLL), 151 to 171 (ILGIHLSGLLSFVFFWAIHLL), 190 to 210 (LVYLVFGGMVWWAVDIAGGLG), 225 to 245 (TFWPFAAGVTGIIGIWATLIL), 265 to 285 (FYGLPGTFALFAFASITVTSG), 308 to 328 (YVIVLSVITLCIATISVNVAA), 350 to 370 (GSFITALLALFTVPWKLMESA), 373 to 393 (VYAFLGLIGGMLGPVAGVMMA), 425 to 445 (AFAATMLGALISLIGMYVPVL), and 448 to 468 (LYDISWFVGVLISFLFYIVLM).

It belongs to the purine-cytosine permease (2.A.39) family.

It localises to the cell membrane. The catalysed reaction is (S)-allantoin(in) + H(+)(in) = (S)-allantoin(out) + H(+)(out). Uptake of allantoin into the cell. Allantoin uptake is not dependent on sodium, and PucI is likely to be a proton-coupled symporter. Shows highest recognition for binding of allantoin, good recognition for binding of hydantoin, L-5-benzylhydantoin and 5-hydroxyhydantoin, and to a lesser extent for a range of nucleobases and nucleosides. The polypeptide is Allantoin permease (Bacillus subtilis (strain 168)).